The following is a 343-amino-acid chain: NADH-quinone oxidoreductase subunit H (343 aa).

The next 8 membrane-spanning stretches (helical) occupy residues Phe-5–Met-25, Phe-76–Ile-96, Ala-119–Trp-139, Val-158–Leu-178, Met-190–Ala-210, Leu-243–Gly-263, Ile-284–Val-304, and Ile-323–Lys-343.

The protein belongs to the complex I subunit 1 family. In terms of assembly, NDH-1 is composed of 14 different subunits. Subunits NuoA, H, J, K, L, M, N constitute the membrane sector of the complex.

It is found in the cell inner membrane. The catalysed reaction is a quinone + NADH + 5 H(+)(in) = a quinol + NAD(+) + 4 H(+)(out). Functionally, NDH-1 shuttles electrons from NADH, via FMN and iron-sulfur (Fe-S) centers, to quinones in the respiratory chain. The immediate electron acceptor for the enzyme in this species is believed to be ubiquinone. Couples the redox reaction to proton translocation (for every two electrons transferred, four hydrogen ions are translocated across the cytoplasmic membrane), and thus conserves the redox energy in a proton gradient. This subunit may bind ubiquinone. The polypeptide is NADH-quinone oxidoreductase subunit H (Flavobacterium psychrophilum (strain ATCC 49511 / DSM 21280 / CIP 103535 / JIP02/86)).